We begin with the raw amino-acid sequence, 137 residues long: Ribosome-binding factor A (137 aa).

The protein belongs to the RbfA family. In terms of assembly, monomer. Binds 30S ribosomal subunits, but not 50S ribosomal subunits or 70S ribosomes.

The protein localises to the cytoplasm. Its function is as follows. One of several proteins that assist in the late maturation steps of the functional core of the 30S ribosomal subunit. Associates with free 30S ribosomal subunits (but not with 30S subunits that are part of 70S ribosomes or polysomes). Required for efficient processing of 16S rRNA. May interact with the 5'-terminal helix region of 16S rRNA. This Nitrobacter hamburgensis (strain DSM 10229 / NCIMB 13809 / X14) protein is Ribosome-binding factor A.